An 860-amino-acid polypeptide reads, in one-letter code: DNA mismatch repair protein MutS (860 aa).

ATP is bound at residue 607-614 (GPNMSGKS).

This sequence belongs to the DNA mismatch repair MutS family.

In terms of biological role, this protein is involved in the repair of mismatches in DNA. It is possible that it carries out the mismatch recognition step. This protein has a weak ATPase activity. The polypeptide is DNA mismatch repair protein MutS (Listeria monocytogenes serotype 4a (strain HCC23)).